Reading from the N-terminus, the 902-residue chain is Ephrin type-B receptor 1-B (902 aa).

An Eph LBD domain is found at 1 to 119 (HRVYVEMRFT…FFKKCPSVVQ (119 aa)). The Extracellular portion of the chain corresponds to 1-459 (HRVYVEMRFT…KSELREQLPL (459 aa)). 2 Fibronectin type-III domains span residues 240-350 (VPSG…TNQA) and 351-448 (APSS…TEED). N-linked (GlcNAc...) asparagine glycans are attached at residues asparagine 252, asparagine 344, and asparagine 398. A helical membrane pass occupies residues 460-480 (IAGSAAAGVVFIVSLVAISIV). Residues 481–902 (CSRKRTYSKE…QISQSPTSIA (422 aa)) lie on the Cytoplasmic side of the membrane. The 264-residue stretch at 537–800 (VKIEEVIGAG…EIVNTLDKMI (264 aa)) folds into the Protein kinase domain. ATP is bound by residues 543-551 (IGAGEFGEV) and lysine 569. Aspartate 662 functions as the Proton acceptor in the catalytic mechanism. The SAM domain occupies 829–893 (SAFTSVDDWL…LNSIQSMRVQ (65 aa)). Residues 900-902 (SIA) carry the PDZ-binding motif.

Belongs to the protein kinase superfamily. Tyr protein kinase family. Ephrin receptor subfamily. Heterotetramer upon binding of the ligand. The heterotetramer is composed of an ephrin dimer and a receptor dimer. Oligomerization is probably required to induce biological responses. Post-translationally, phosphorylated. Autophosphorylation is stimulated by ligands. Expressed in the embryo in the brain and spinal cord and in the first and fourth visceral arches. Most abundant in adult brain, with lower levels in eye, heart, ovary, oviduct, lung and pharynx.

The protein localises to the cell membrane. It localises to the early endosome membrane. The protein resides in the cell projection. Its subcellular location is the dendrite. The enzyme catalyses L-tyrosyl-[protein] + ATP = O-phospho-L-tyrosyl-[protein] + ADP + H(+). In terms of biological role, receptor tyrosine kinase which binds promiscuously transmembrane ephrin-B family ligands residing on adjacent cells, leading to contact-dependent bidirectional signaling into neighboring cells. The signaling pathway downstream of the receptor is referred to as forward signaling while the signaling pathway downstream of the ephrin ligand is referred to as reverse signaling. May play a role in axon guidance during nervous system development. May also play an important redundant role with other ephrin-B receptors in development and maturation of dendritic spines and synapse formation. More generally, may play a role in targeted cell migration and adhesion. Upon activation by ephrin-B ligands activates the MAPK/ERK and the JNK signaling cascades to regulate cell migration and adhesion respectively. This chain is Ephrin type-B receptor 1-B (ephb1-b), found in Xenopus laevis (African clawed frog).